The chain runs to 86 residues: EMBRYO SURROUNDING FACTOR 1-like protein 2 (86 aa).

An N-terminal signal peptide occupies residues 1 to 21 (MKSHIAIICIIMLSFFSMHEY). 4 cysteine pairs are disulfide-bonded: Cys39–Cys54, Cys44–Cys82, Cys52–Cys78, and Cys55–Cys65.

The protein belongs to the MEG family.

This is EMBRYO SURROUNDING FACTOR 1-like protein 2 (ESFL2) from Arabidopsis thaliana (Mouse-ear cress).